The primary structure comprises 218 residues: MNRQKVIAIDGPGASGKGTVAARVAAALGYDYLDTGALYRLTALYAQKQGVEWHDEENVSALAKKLPAVFSGNRILLDGEDVSDGIRTEAIGMGASAVAQWPKVRAALLQRQRDFLTEKGLVADGRDTGSVVFPQAELKIFLTAESKIRAERRAKQIGIPCEGFTFERILSDIETRDEADRNRKVAPLKQQPDALLLDTSRLTIEETVKKVLDWYRKV.

11–19 (GPGASGKGT) contributes to the ATP binding site.

It belongs to the cytidylate kinase family. Type 1 subfamily.

The protein localises to the cytoplasm. The catalysed reaction is CMP + ATP = CDP + ADP. It catalyses the reaction dCMP + ATP = dCDP + ADP. The chain is Cytidylate kinase from Neisseria gonorrhoeae (strain ATCC 700825 / FA 1090).